The sequence spans 728 residues: Polyribonucleotide nucleotidyltransferase (728 aa).

Mg(2+) contacts are provided by D509 and D515. The region spanning 576-638 is the KH domain; it reads TKIYTFYIPK…TKLKIAILKI (63 aa). An S1 motif domain is found at 648–715; the sequence is GTIYKAKVKN…KFRKIKLSHK (68 aa).

The protein belongs to the polyribonucleotide nucleotidyltransferase family. The cofactor is Mg(2+).

The protein resides in the cytoplasm. The catalysed reaction is RNA(n+1) + phosphate = RNA(n) + a ribonucleoside 5'-diphosphate. Involved in mRNA degradation. Catalyzes the phosphorolysis of single-stranded polyribonucleotides processively in the 3'- to 5'-direction. In Karelsulcia muelleri (strain GWSS) (Sulcia muelleri), this protein is Polyribonucleotide nucleotidyltransferase.